The sequence spans 164 residues: Small ribosomal subunit protein uS3m (164 aa).

The N-terminal 23 residues, 1–23 (MLRSIQHVEALSSRQISTTSMLL), are a transit peptide targeting the mitochondrion.

This sequence belongs to the universal ribosomal protein uS3 family. In terms of assembly, component of the mitochondrial ribosome small subunit (28S) which comprises a 12S rRNA and about 30 distinct proteins.

It is found in the mitochondrion. This chain is Small ribosomal subunit protein uS3m (mrps-24), found in Caenorhabditis elegans.